Reading from the N-terminus, the 119-residue chain is uncharacterized protein (119 aa).

The first 26 residues, 1–26, serve as a signal peptide directing secretion; that stretch reads MNKLKRLSMLTVMIASVFIFSSHALA. One can recognise an SH3b domain in the interval 30 to 104; sequence YTVSTSSGAP…IVPGFVSDTY (75 aa).

This sequence to B.subtilis YraJ.

This is an uncharacterized protein from Bacillus subtilis (strain 168).